The following is a 278-amino-acid chain: Large ribosomal subunit protein uL2 (278 aa).

Residues A202 to K278 form a disordered region.

Belongs to the universal ribosomal protein uL2 family. In terms of assembly, part of the 50S ribosomal subunit. Forms a bridge to the 30S subunit in the 70S ribosome.

One of the primary rRNA binding proteins. Required for association of the 30S and 50S subunits to form the 70S ribosome, for tRNA binding and peptide bond formation. It has been suggested to have peptidyltransferase activity; this is somewhat controversial. Makes several contacts with the 16S rRNA in the 70S ribosome. The protein is Large ribosomal subunit protein uL2 of Rhizobium johnstonii (strain DSM 114642 / LMG 32736 / 3841) (Rhizobium leguminosarum bv. viciae).